We begin with the raw amino-acid sequence, 151 residues long: SsrA-binding protein (151 aa).

The protein belongs to the SmpB family.

The protein resides in the cytoplasm. Required for rescue of stalled ribosomes mediated by trans-translation. Binds to transfer-messenger RNA (tmRNA), required for stable association of tmRNA with ribosomes. tmRNA and SmpB together mimic tRNA shape, replacing the anticodon stem-loop with SmpB. tmRNA is encoded by the ssrA gene; the 2 termini fold to resemble tRNA(Ala) and it encodes a 'tag peptide', a short internal open reading frame. During trans-translation Ala-aminoacylated tmRNA acts like a tRNA, entering the A-site of stalled ribosomes, displacing the stalled mRNA. The ribosome then switches to translate the ORF on the tmRNA; the nascent peptide is terminated with the 'tag peptide' encoded by the tmRNA and targeted for degradation. The ribosome is freed to recommence translation, which seems to be the essential function of trans-translation. The sequence is that of SsrA-binding protein from Chlamydia muridarum (strain MoPn / Nigg).